The sequence spans 188 residues: Elongation factor P-like protein (188 aa).

The protein belongs to the elongation factor P family.

The chain is Elongation factor P-like protein from Aliivibrio fischeri (strain MJ11) (Vibrio fischeri).